A 557-amino-acid polypeptide reads, in one-letter code: uncharacterized protein (557 aa).

The first 30 residues, 1 to 30, serve as a signal peptide directing secretion; it reads MAPRRRRHTRIAGLRVVGTATLVAATTLTA. The N-palmitoyl cysteine moiety is linked to residue Cys-31. The S-diacylglycerol cysteine moiety is linked to residue Cys-31.

To M.bovis Mb2616c and M.leprae ML0489.

The protein resides in the cell membrane. This is an uncharacterized protein from Mycobacterium tuberculosis (strain ATCC 25618 / H37Rv).